Reading from the N-terminus, the 222-residue chain is Large ribosomal subunit protein uL1 (222 aa).

It belongs to the universal ribosomal protein uL1 family. Part of the 50S ribosomal subunit.

Binds directly to 23S rRNA. Probably involved in E site tRNA release. Functionally, protein L1 is also a translational repressor protein, it controls the translation of its operon by binding to its mRNA. In Pyrobaculum neutrophilum (strain DSM 2338 / JCM 9278 / NBRC 100436 / V24Sta) (Thermoproteus neutrophilus), this protein is Large ribosomal subunit protein uL1.